Reading from the N-terminus, the 472-residue chain is Adenosylhomocysteinase (472 aa).

Substrate is bound by residues threonine 64, aspartate 138, and glutamate 198. 199–201 (TTT) lines the NAD(+) pocket. The substrate site is built by lysine 228 and aspartate 232. NAD(+) contacts are provided by residues asparagine 233, 262-267 (GFGDVG), glutamate 285, asparagine 320, 341-343 (IGH), and asparagine 386.

It belongs to the adenosylhomocysteinase family. Requires NAD(+) as cofactor.

Its subcellular location is the cytoplasm. It catalyses the reaction S-adenosyl-L-homocysteine + H2O = L-homocysteine + adenosine. The protein operates within amino-acid biosynthesis; L-homocysteine biosynthesis; L-homocysteine from S-adenosyl-L-homocysteine: step 1/1. May play a key role in the regulation of the intracellular concentration of adenosylhomocysteine. The protein is Adenosylhomocysteinase of Prochlorococcus marinus (strain MIT 9301).